We begin with the raw amino-acid sequence, 1381 residues long: Hepatocyte growth factor receptor (1381 aa).

A signal peptide spans 1 to 24 (MKAPTVLTPGILVLLFILVQRSNG). Over 25–932 (ECKEALTKSE…VIVQPDQNFT (908 aa)) the chain is Extracellular. Residues 27-515 (KEALTKSEMN…TGKKITKIPL (489 aa)) form the Sema domain. Asn-45 carries N-linked (GlcNAc...) asparagine glycosylation. 4 disulfides stabilise this stretch: Cys-95-Cys-101, Cys-98-Cys-160, Cys-133-Cys-141, and Cys-172-Cys-175. Asn-106 carries N-linked (GlcNAc...) asparagine glycosylation. N-linked (GlcNAc...) asparagine glycosylation occurs at Asn-149. N-linked (GlcNAc...) asparagine glycosylation occurs at Asn-202. 2 disulfide bridges follow: Cys-298/Cys-363 and Cys-385/Cys-397. A glycan (N-linked (GlcNAc...) asparagine) is linked at Asn-399. Intrachain disulfides connect Cys-520-Cys-538, Cys-526-Cys-561, Cys-529-Cys-545, and Cys-541-Cys-551. IPT/TIG domains follow at residues 563 to 655 (PTIY…FSYV), 657 to 739 (PIIT…FSYR), and 742 to 836 (PIVY…LIYV). Thr-582 carries O-linked (Man) threonine glycosylation. 2 N-linked (GlcNAc...) asparagine glycosylation sites follow: Asn-607 and Asn-635. O-linked (Man) threonine glycans are attached at residues Thr-676 and Thr-761. Asn-785, Asn-879, and Asn-930 each carry an N-linked (GlcNAc...) asparagine glycan. The chain crosses the membrane as a helical span at residues 933–955 (GLIAGVVSISIALLLLLGLFLWL). Topologically, residues 956 to 1381 (KKRKQIKDLG…QDNADGEVDT (426 aa)) are cytoplasmic. Residue Ser-966 is modified to Phosphoserine. Thr-977 carries the post-translational modification Phosphothreonine. Residues Ser-990, Ser-997, and Ser-1000 each carry the phosphoserine modification. Tyr-1003 is subject to Phosphotyrosine. The 268-residue stretch at 1078–1345 (VHFNEVIGRG…RISAIFSAFI (268 aa)) folds into the Protein kinase domain. ATP is bound by residues 1084–1092 (IGRGHFGCV) and Lys-1110. Asp-1204 serves as the catalytic Proton acceptor. Residues 1212 to 1381 (LDEKFTVKVA…QDNADGEVDT (170 aa)) form an interaction with RANBP9 region. Position 1230 is a phosphotyrosine (Tyr-1230). Phosphotyrosine; by autocatalysis occurs at positions 1234 and 1235. A Phosphothreonine modification is found at Thr-1289. The tract at residues 1320–1359 (WHPKAEMRPSFSELVSRISAIFSAFIGEHYVHVNATYVNV) is interaction with MUC20. Phosphotyrosine; by autocatalysis is present on residues Tyr-1349 and Tyr-1356. Tyr-1365 bears the Phosphotyrosine mark.

This sequence belongs to the protein kinase superfamily. Tyr protein kinase family. In terms of assembly, heterodimer made of an alpha chain (50 kDa) and a beta chain (145 kDa) which are disulfide linked. Binds PLXNB1. Interacts when phosphorylated with downstream effectors including STAT3, PIK3R1, SRC, PCLG1, GRB2 and GAB1. Interacts with SPSB1, SPSB2 and SPSB4. Interacts with INPP5D/SHIP1. When phosphorylated at Tyr-1356, interacts with INPPL1/SHIP2. Interacts with RANBP9 and RANBP10, as well as SPSB1, SPSB2, SPSB3 and SPSB4. SPSB1 binding occurs in the presence and in the absence of HGF, however HGF treatment has a positive effect on this interaction. Interacts with MUC20; prevents interaction with GRB2 and suppresses hepatocyte growth factor-induced cell proliferation. Interacts with GRB10. Interacts with PTPN1 and PTPN2. Interacts with tensin TNS3. Interacts (when phosphorylated) with tensin TNS4 (via SH2 domain); the interaction increases MET protein stability by inhibiting MET endocytosis and subsequent lysosomal degradation. Post-translationally, autophosphorylated in response to ligand binding on Tyr-1234 and Tyr-1235 in the kinase domain leading to further phosphorylation of Tyr-1349 and Tyr-1356 in the C-terminal multifunctional docking site. Dephosphorylated by PTPRJ at Tyr-1349 and Tyr-1365. Dephosphorylated by PTPN1 and PTPN2. Ubiquitinated. Ubiquitination by CBL regulates the receptor stability and activity through proteasomal degradation. In terms of processing, O-mannosylation of IPT/TIG domains by TMEM260 is required for protein maturation. O-mannosylated residues are composed of single mannose glycans that are not elongated or modified.

It localises to the membrane. The enzyme catalyses L-tyrosyl-[protein] + ATP = O-phospho-L-tyrosyl-[protein] + ADP + H(+). In its inactive state, the C-terminal tail interacts with the catalytic domain and inhibits the kinase activity. Upon ligand binding, the C-terminal tail is displaced and becomes phosphorylated, thus increasing the kinase activity. Receptor tyrosine kinase that transduces signals from the extracellular matrix into the cytoplasm by binding to hepatocyte growth factor/HGF ligand. Regulates many physiological processes including proliferation, scattering, morphogenesis and survival. Ligand binding at the cell surface induces autophosphorylation of MET on its intracellular domain that provides docking sites for downstream signaling molecules. Following activation by ligand, interacts with the PI3-kinase subunit PIK3R1, PLCG1, SRC, GRB2, STAT3 or the adapter GAB1. Recruitment of these downstream effectors by MET leads to the activation of several signaling cascades including the RAS-ERK, PI3 kinase-AKT, or PLCgamma-PKC. The RAS-ERK activation is associated with the morphogenetic effects while PI3K/AKT coordinates prosurvival effects. During embryonic development, MET signaling plays a role in gastrulation, development and migration of muscles and neuronal precursors, angiogenesis and kidney formation. In adults, participates in wound healing as well as organ regeneration and tissue remodeling. Also promotes differentiation and proliferation of hematopoietic cells. The protein is Hepatocyte growth factor receptor (MET) of Ateles geoffroyi (Black-handed spider monkey).